We begin with the raw amino-acid sequence, 467 residues long: Ribulose bisphosphate carboxylase large chain (467 aa).

The residue at position 5 (Lys-5) is an N6,N6,N6-trimethyllysine. Substrate is bound by residues Asn-114 and Thr-164. Lys-166 acts as the Proton acceptor in catalysis. Residue Lys-168 coordinates substrate. Residues Lys-192, Asp-194, and Glu-195 each contribute to the Mg(2+) site. Position 192 is an N6-carboxylysine (Lys-192). Catalysis depends on His-285, which acts as the Proton acceptor. Substrate is bound by residues Arg-286, His-318, and Ser-370.

Belongs to the RuBisCO large chain family. Type I subfamily. As to quaternary structure, heterohexadecamer of 8 large chains and 8 small chains; disulfide-linked. The disulfide link is formed within the large subunit homodimers. It depends on Mg(2+) as a cofactor. Post-translationally, the disulfide bond which can form in the large chain dimeric partners within the hexadecamer appears to be associated with oxidative stress and protein turnover.

The protein resides in the plastid. Its subcellular location is the chloroplast. The enzyme catalyses 2 (2R)-3-phosphoglycerate + 2 H(+) = D-ribulose 1,5-bisphosphate + CO2 + H2O. It catalyses the reaction D-ribulose 1,5-bisphosphate + O2 = 2-phosphoglycolate + (2R)-3-phosphoglycerate + 2 H(+). Its function is as follows. RuBisCO catalyzes two reactions: the carboxylation of D-ribulose 1,5-bisphosphate, the primary event in carbon dioxide fixation, as well as the oxidative fragmentation of the pentose substrate in the photorespiration process. Both reactions occur simultaneously and in competition at the same active site. This chain is Ribulose bisphosphate carboxylase large chain, found in Tasmannia insipida (Pepperbush).